The primary structure comprises 432 residues: Alcohol acyltransferase 9 (432 aa).

Residues His156 and Asp379 each act as proton acceptor in the active site.

It belongs to the plant acyltransferase family. Expressed in fruit.

The enzyme catalyses 2-(methylsulfanyl)acetyl-CoA + butan-1-ol = butyl 2-(methylsulfanyl)acetate + CoA. It catalyses the reaction ethanol + acetyl-CoA = ethyl acetate + CoA. It carries out the reaction butan-1-ol + acetyl-CoA = butyl acetate + CoA. The catalysed reaction is butan-1-ol + propanoyl-CoA = butyl propanoate + CoA. Its function is as follows. Involved in the biosynthesis of volatile esters which confer kiwifruit flavor. Alcohol acyl transferase that can use a wide range of alcohols as substrate to produce esters. Exhibits acetyl-CoA:alcohol O-acyltransferase activity. In Actinidia deliciosa (Kiwi), this protein is Alcohol acyltransferase 9.